The chain runs to 116 residues: uncharacterized protein (116 aa).

Positions 77–116 (SATSHYPKADDPQRFARSVSRGPSRVRRPARNSASRPVRR) are disordered.

This is an uncharacterized protein from Frog virus 3 (isolate Goorha) (FV-3).